Consider the following 316-residue polypeptide: Large ribosomal subunit protein uL10 (316 aa).

The disordered stretch occupies residues 282–316; it reads ASAAKADEPKKEEAKKVEEEEEEEEDGFMGFGMFD. Residues 286 to 299 are compositionally biased toward basic and acidic residues; it reads KADEPKKEEAKKVE.

This sequence belongs to the universal ribosomal protein uL10 family. P0 forms a pentameric complex by interaction with dimers of P1 and P2. Post-translationally, phosphorylated.

Ribosomal protein P0 is the functional equivalent of E.coli protein L10. The polypeptide is Large ribosomal subunit protein uL10 (RPLP0) (Plasmodium falciparum (isolate 7G8)).